The sequence spans 394 residues: Flavin-dependent monooxygenase, oxygenase subunit HsaA (394 aa).

Residues W84, 118–120 (SSY), 141–143 (WSS), R263, 346–347 (AT), and 368–369 (HA) each bind FMN.

The protein belongs to the HpaH/HsaA monooxygenase family. Homotetramer under anaerobic conditions. HsaAB monooxygenase consists of an oxygenase component HsaA and a reductase component HsaB.

It carries out the reaction 3-hydroxy-9,10-secoandrosta-1,3,5(10)-triene-9,17-dione + FMNH2 + O2 = 3,4-dihydroxy-9,10-secoandrosta-1,3,5(10)-triene-9,17-dione + FMN + H2O + H(+). It functions in the pathway lipid metabolism; steroid biosynthesis. Its function is as follows. Catalyzes the o-hydroxylation of 3-hydroxy-9,10-secoandrosta-1,3,5(10)-triene-9,17-dione (3-HSA) to 3,4-dihydroxy-9,10-secoandrosta-1,3,5(10)-triene-9,17-dione (3,4-DHSA) in the catabolism of cholesterol. The protein is Flavin-dependent monooxygenase, oxygenase subunit HsaA of Mycobacterium tuberculosis (strain CDC 1551 / Oshkosh).